The primary structure comprises 304 residues: Killer cell immunoglobulin-like receptor 2DS4 (304 aa).

The signal sequence occupies residues 1–21 (MSLMVIIMACVGFFLLQGAWP). Residues 22–245 (QEGVHRKPSF…SKTGNPRHLH (224 aa)) are Extracellular-facing. 2 consecutive Ig-like C2-type domains span residues 42–107 (EETV…VPHS) and 142–205 (GENV…FRDA). Cys49 and Cys100 are oxidised to a cystine. Asn67, Asn84, Asn144, Asn178, and Asn211 each carry an N-linked (GlcNAc...) asparagine glycan. Residues Cys149 and Cys198 are joined by a disulfide bond. Residues 220-239 (VTGNPSNSWPSPTEPSSKTG) form a disordered region. The helical transmembrane segment at 246 to 265 (VLIGTSVVKIPFTILLFFLL) threads the bilayer. The Cytoplasmic segment spans residues 266 to 304 (HRWCSDKKNAAVMDQEPAGNRTVNSEDSDEQDHQEVSYA). A disordered region spans residues 280-304 (QEPAGNRTVNSEDSDEQDHQEVSYA).

The protein belongs to the immunoglobulin superfamily. In terms of assembly, interacts with HLA-F; this interaction is direct.

The protein resides in the cell membrane. In terms of biological role, receptor on natural killer (NK) cells for HLA-C alleles. Does not inhibit the activity of NK cells. The protein is Killer cell immunoglobulin-like receptor 2DS4 of Homo sapiens (Human).